Here is a 361-residue protein sequence, read N- to C-terminus: 3-dehydroquinate synthase (361 aa).

Residues 60 to 65, 94 to 98, 118 to 119, K131, and K140 each bind NAD(+); these read DAEAAK, GATTD, and TT. Residues E173, H242, and H258 each contribute to the Zn(2+) site.

Belongs to the sugar phosphate cyclases superfamily. Dehydroquinate synthase family. Co(2+) serves as cofactor. Zn(2+) is required as a cofactor. Requires NAD(+) as cofactor.

It is found in the cytoplasm. It carries out the reaction 7-phospho-2-dehydro-3-deoxy-D-arabino-heptonate = 3-dehydroquinate + phosphate. Its pathway is metabolic intermediate biosynthesis; chorismate biosynthesis; chorismate from D-erythrose 4-phosphate and phosphoenolpyruvate: step 2/7. In terms of biological role, catalyzes the conversion of 3-deoxy-D-arabino-heptulosonate 7-phosphate (DAHP) to dehydroquinate (DHQ). The protein is 3-dehydroquinate synthase of Cutibacterium acnes (strain DSM 16379 / KPA171202) (Propionibacterium acnes).